The primary structure comprises 99 residues: Malonate decarboxylase acyl carrier protein (99 aa).

S25 is modified (O-(phosphoribosyl dephospho-coenzyme A)serine).

Belongs to the MdcC family. Post-translationally, covalently binds the prosthetic group of malonate decarboxylase.

It localises to the cytoplasm. In terms of biological role, subunit of malonate decarboxylase, it is an acyl carrier protein to which acetyl and malonyl thioester residues are bound via a 2'-(5''-phosphoribosyl)-3'-dephospho-CoA prosthetic group and turn over during the catalytic mechanism. This Pseudomonas aeruginosa (strain LESB58) protein is Malonate decarboxylase acyl carrier protein.